Here is a 705-residue protein sequence, read N- to C-terminus: MARDYPLELYRNFGIMAHIDAGKTTTTERILYYTGKSHKIGEVHDGAATMDWMEQEQERGITITSAATTTFWERTEDGKTPLSPKHRFNIIDTPGHVDFTIEVERSLAVLDGAVCLLDANAGVEPQTETVWRQADRYKVPRIVFVNKMDKIGADFFNCVKMIKDRTGATPAPIALPIGAEDKLEGIIDLVTMQEWVYQGEDLGASWIIKDVRDELKAEAEEWRGKLIELAVEQDDEAMEAYLEGNEPDVPTLRKLIRKGCLAMAFVPVTAGSAFKNKGVQPVLNSVIDYLPSPLDVPAYMGFAPGDETETRNIARSADDSQPFAALAFKIMNDPFVGSLTFTRLYSGVLKKGDQMVNSTKGKRERVGRMMMMHAINREEIDEAFAGDIIALAGLKETTTGDTLCDPANQVVLETMTFPEPVIEIAVEPKTKADQEKMGLALARLAAEDPSFRVETDFESGQTIMKGMGELHLDILVDRMKREFKVEANIGAPQVAYRETISREAEIDYTHKKQTGGTGQFARVKLVITPTEPGEGYSFESKIVGGAVPKEYIPGVEKGIKSVMDSGPLAGFPVIDFRVALIDGAFHDVDSSVLAFEIASRAAMREGLKKAGAKLLEPIMKVEVVTPEEYTGGIIGDLTSRRGMVQGQDTRGNANVINAFVPLANMFGYINTLRSMSSGRAVFTMHFDHYDAVPQNISDEIQKKYA.

Positions 8-294 (ELYRNFGIMA…SVIDYLPSPL (287 aa)) constitute a tr-type G domain. GTP-binding positions include 17-24 (AHIDAGKT), 92-96 (DTPGH), and 146-149 (NKMD).

Belongs to the TRAFAC class translation factor GTPase superfamily. Classic translation factor GTPase family. EF-G/EF-2 subfamily.

It is found in the cytoplasm. Its function is as follows. Catalyzes the GTP-dependent ribosomal translocation step during translation elongation. During this step, the ribosome changes from the pre-translocational (PRE) to the post-translocational (POST) state as the newly formed A-site-bound peptidyl-tRNA and P-site-bound deacylated tRNA move to the P and E sites, respectively. Catalyzes the coordinated movement of the two tRNA molecules, the mRNA and conformational changes in the ribosome. This is Elongation factor G from Cereibacter sphaeroides (strain KD131 / KCTC 12085) (Rhodobacter sphaeroides).